We begin with the raw amino-acid sequence, 311 residues long: 5'-adenylylsulfate reductase-like 3 (311 aa).

An N-terminal signal peptide occupies residues 1–22 (MATRLLCWTALLLPIIAATAAA). The region spanning 23–164 (SPLPEACPVP…LAAFYRDVSG (142 aa)) is the Thioredoxin domain. Asn-139 is a glycosylation site (N-linked (GlcNAc...) asparagine). The helical transmembrane segment at 210–230 (LALATAFVILRLLYLLFPKIG) threads the bilayer. N-linked (GlcNAc...) asparagine glycosylation is found at Asn-281 and Asn-305.

Its subcellular location is the membrane. The polypeptide is 5'-adenylylsulfate reductase-like 3 (APRL3) (Oryza sativa subsp. japonica (Rice)).